A 420-amino-acid chain; its full sequence is uncharacterized protein (420 aa).

Residues 79-420 (GKGIDNEAAM…AVNTIRGAES (342 aa)) enclose the YcaO domain.

This is an uncharacterized protein from Rhizobium leguminosarum bv. trifolii.